Here is a 407-residue protein sequence, read N- to C-terminus: Succinyl-diaminopimelate desuccinylase (407 aa).

The segment covering 1–10 has biased composition (polar residues); sequence MSDIDNNLTS. Residues 1–20 are disordered; the sequence is MSDIDNNLTSQTHQQATHQQ. Residues 11–20 show a composition bias toward low complexity; sequence QTHQQATHQQ. Residue His93 coordinates Zn(2+). Asp95 is a catalytic residue. Zn(2+) is bound at residue Asp126. Glu160 acts as the Proton acceptor in catalysis. Positions 161, 189, and 379 each coordinate Zn(2+).

Belongs to the peptidase M20A family. DapE subfamily. As to quaternary structure, homodimer. Zn(2+) is required as a cofactor. Requires Co(2+) as cofactor.

It carries out the reaction N-succinyl-(2S,6S)-2,6-diaminopimelate + H2O = (2S,6S)-2,6-diaminopimelate + succinate. It participates in amino-acid biosynthesis; L-lysine biosynthesis via DAP pathway; LL-2,6-diaminopimelate from (S)-tetrahydrodipicolinate (succinylase route): step 3/3. Catalyzes the hydrolysis of N-succinyl-L,L-diaminopimelic acid (SDAP), forming succinate and LL-2,6-diaminopimelate (DAP), an intermediate involved in the bacterial biosynthesis of lysine and meso-diaminopimelic acid, an essential component of bacterial cell walls. This is Succinyl-diaminopimelate desuccinylase from Psychrobacter arcticus (strain DSM 17307 / VKM B-2377 / 273-4).